A 152-amino-acid chain; its full sequence is Proteolipid protein 2 (152 aa).

Residue asparagine 18 is glycosylated (N-linked (GlcNAc...) asparagine). The 119-residue stretch at 19–137 folds into the MARVEL domain; the sequence is FSRTRKGILL…DAYVTFPVRQ (119 aa). The next 3 helical transmembrane spans lie at 25 to 45, 48 to 68, and 85 to 105; these read GILL…FSAS, GYSS…VVYM, and FFRT…VLVE. N-linked (GlcNAc...) asparagine glycosylation occurs at asparagine 108. A helical membrane pass occupies residues 112–132; that stretch reads IVAGVLGLIATCLFGYDAYVT.

Enriched in colonic mucosa. The expression of A4 follows a gradient along the crypto-villus axis with the most abundant message occurring in the lower half of the crypt.

It is found in the membrane. In terms of biological role, may play a role in cell differentiation in the intestinal epithelium. The chain is Proteolipid protein 2 (PLP2) from Homo sapiens (Human).